A 365-amino-acid chain; its full sequence is MKKTALYSWHEEAGAKIIDFGGYLMPVQYRGIIAEHHAVRSAAGLFDVSHMGNFYVRGARAKEFLQYMTTNDLDNAEDGQAQYNLMLYPHGGIVDDLIIYRIDSETFFLIVNASNAQKDFEWLQQHIAAFEGVVLEDHTDQLSLIALQGPLALNILATVFPALDVPALGAFRFCKVLFQGTEVMIAGTGYTGEKGVEICLPNAMALPLWEALFEAGKESGIQPIGLGARDTLRLEMGYSLYGHEIDQDTNPLEARLKWVVKMGKGHFMGKEACQQVEGNLKRGVAGFSLDGRVLPRQHFKLYNSDRQEIGWVCSGTLSPTLQEPVGTCNVVREYLKPGTPILVEVRGSLHTGVIRRLPFVTTSLS.

Belongs to the GcvT family. As to quaternary structure, the glycine cleavage system is composed of four proteins: P, T, L and H.

It carries out the reaction N(6)-[(R)-S(8)-aminomethyldihydrolipoyl]-L-lysyl-[protein] + (6S)-5,6,7,8-tetrahydrofolate = N(6)-[(R)-dihydrolipoyl]-L-lysyl-[protein] + (6R)-5,10-methylene-5,6,7,8-tetrahydrofolate + NH4(+). Functionally, the glycine cleavage system catalyzes the degradation of glycine. In Pelodictyon phaeoclathratiforme (strain DSM 5477 / BU-1), this protein is Aminomethyltransferase.